Consider the following 384-residue polypeptide: DNA replication and repair protein RecF (384 aa).

43 to 50 lines the ATP pocket; that stretch reads GENGSGKT.

It belongs to the RecF family.

Its subcellular location is the cytoplasm. Its function is as follows. The RecF protein is involved in DNA metabolism; it is required for DNA replication and normal SOS inducibility. RecF binds preferentially to single-stranded, linear DNA. It also seems to bind ATP. This Brucella abortus (strain 2308) protein is DNA replication and repair protein RecF.